A 37-amino-acid polypeptide reads, in one-letter code: MKVRPSVKKMCEKCKIIKRKGRVMVICENPKHKQKQG.

This sequence belongs to the bacterial ribosomal protein bL36 family.

The chain is Large ribosomal subunit protein bL36 from Caldanaerobacter subterraneus subsp. tengcongensis (strain DSM 15242 / JCM 11007 / NBRC 100824 / MB4) (Thermoanaerobacter tengcongensis).